Reading from the N-terminus, the 249-residue chain is Histone H1 (249 aa).

Low complexity-rich tracts occupy residues 1-19 and 27-43; these read MSDSVVAVSASPVTPQTAS and KKPASASASKAKKTTAP. Disordered regions lie at residues 1–53 and 105–249; these read MSDS…QQMV and QTKG…ATKK. An H15 domain is found at 45 to 119; that stretch reads THPPTQQMVD…GASGSFKLSA (75 aa). Residues 121–134 show a composition bias toward basic and acidic residues; it reads SKKEPKPKVSSVEK. A compositionally biased stretch (basic residues) spans 146 to 158; the sequence is AKKKTISATKKPK. Residues 173–190 show a composition bias toward basic and acidic residues; sequence KSVDKKKAEKAKAKDAKK. Residues 195 to 233 are compositionally biased toward low complexity; the sequence is KAKPTTAKAKSSAAKPKTPKPKTTSAKPKKVVAAASPKK. Positions 234–249 are enriched in basic residues; that stretch reads AAAKKPKAKTASATKK.

This sequence belongs to the histone H1/H5 family.

The protein resides in the nucleus. It is found in the chromosome. Its function is as follows. Histones H1 are necessary for the condensation of nucleosome chains into higher-order structures. The sequence is that of Histone H1 (His1) from Drosophila hydei (Fruit fly).